Here is a 400-residue protein sequence, read N- to C-terminus: MSERVILAYSGGLDTSVAISWIGKETGREVVAVAIDLGQGGEDMDVVRQRALDCGAVEAVVVDARDEFAENYCLPAIQSNALYMDRYPLVSALSRPLIVKHLVDAAREHKGGIVAHGCTGKGNDQVRFEVGFASLAPDLEVLAPVRDYAWTREKAIAFAEENAIPINVTKRSPFSIDQNVWGRAVETGFLEHLWNAPTKDVYDYTEDPTLNWSTPDEVIVGFDKGVPVSVDGRDVTVLQAIEELNRRAGAQGVGRLDVVEDRLVGIKSREIYEAPGAMVLITAHTELEHVTLERELGRFKRTTDQKWGELVYDGLWFSPLKTALESFVAKTQEHVSGEIRLVLHGGHIAVNGRRSQESLYDFNLATYDEGDTFDQSSAKGFVHVHGLSSSISARRDLGIK.

8-16 (AYSGGLDTS) serves as a coordination point for ATP. Tyrosine 87 contacts L-citrulline. Glycine 117 serves as a coordination point for ATP. Residues threonine 119, asparagine 123, and aspartate 124 each coordinate L-aspartate. L-citrulline is bound at residue asparagine 123. 4 residues coordinate L-citrulline: arginine 127, serine 175, glutamate 260, and tyrosine 272.

It belongs to the argininosuccinate synthase family. Type 1 subfamily. Homotetramer.

It localises to the cytoplasm. The enzyme catalyses L-citrulline + L-aspartate + ATP = 2-(N(omega)-L-arginino)succinate + AMP + diphosphate + H(+). Its pathway is amino-acid biosynthesis; L-arginine biosynthesis; L-arginine from L-ornithine and carbamoyl phosphate: step 2/3. The chain is Argininosuccinate synthase from Mycobacterium sp. (strain JLS).